Consider the following 80-residue polypeptide: UPF0346 protein LSEI_1394 (80 aa).

Belongs to the UPF0346 family.

The sequence is that of UPF0346 protein LSEI_1394 from Lacticaseibacillus paracasei (strain ATCC 334 / BCRC 17002 / CCUG 31169 / CIP 107868 / KCTC 3260 / NRRL B-441) (Lactobacillus paracasei).